A 204-amino-acid polypeptide reads, in one-letter code: Probable 5-formyltetrahydrofolate cyclo-ligase (204 aa).

5-9 (KNQLR) is an ATP binding site. Substrate-binding positions include E57, W102, and 140–144 (HGKGY). Residues 139-146 (GHGKGYYD) and D188 contribute to the ATP site.

It belongs to the 5-formyltetrahydrofolate cyclo-ligase family.

The enzyme catalyses (6S)-5-formyl-5,6,7,8-tetrahydrofolate + ATP = (6R)-5,10-methenyltetrahydrofolate + ADP + phosphate. The chain is Probable 5-formyltetrahydrofolate cyclo-ligase from Schizosaccharomyces pombe (strain 972 / ATCC 24843) (Fission yeast).